We begin with the raw amino-acid sequence, 461 residues long: Glucan endo-1,3-beta-glucosidase (461 aa).

An N-terminal signal peptide occupies residues 1-23 (MPLLILLMLLAAGAAGAESATPS). The Proton donor role is filled by Glu123. Glu265 functions as the Nucleophile in the catalytic mechanism. The interval 350 to 375 (GASVAPTPSPNPSPNPSPKPAPSGGG) is disordered. Residues 356–370 (TPSPNPSPNPSPKPA) show a composition bias toward pro residues. A disulfide bond links Cys378 and Cys439.

This sequence belongs to the glycosyl hydrolase 17 family. Post-translationally, contains two additional disulfide bonds.

It carries out the reaction Hydrolysis of (1-&gt;3)-beta-D-glucosidic linkages in (1-&gt;3)-beta-D-glucans.. Its function is as follows. Is thought to be an important plant defense-related product against fungal pathogens. The polypeptide is Glucan endo-1,3-beta-glucosidase (GLC1) (Triticum aestivum (Wheat)).